The following is a 490-amino-acid chain: ATP synthase subunit beta, chloroplastic (490 aa).

ATP is bound at residue 170–177 (GGAGVGKT).

It belongs to the ATPase alpha/beta chains family. As to quaternary structure, F-type ATPases have 2 components, CF(1) - the catalytic core - and CF(0) - the membrane proton channel. CF(1) has five subunits: alpha(3), beta(3), gamma(1), delta(1), epsilon(1). CF(0) has four main subunits: a(1), b(1), b'(1) and c(9-12).

The protein localises to the plastid. The protein resides in the chloroplast thylakoid membrane. It carries out the reaction ATP + H2O + 4 H(+)(in) = ADP + phosphate + 5 H(+)(out). In terms of biological role, produces ATP from ADP in the presence of a proton gradient across the membrane. The catalytic sites are hosted primarily by the beta subunits. The protein is ATP synthase subunit beta, chloroplastic of Calystegia sepium (Hedge bindweed).